A 354-amino-acid polypeptide reads, in one-letter code: Ferrochelatase (354 aa).

Fe cation-binding residues include H204 and E306.

Belongs to the ferrochelatase family.

It localises to the cytoplasm. The catalysed reaction is heme b + 2 H(+) = protoporphyrin IX + Fe(2+). The protein operates within porphyrin-containing compound metabolism; protoheme biosynthesis; protoheme from protoporphyrin-IX: step 1/1. Catalyzes the ferrous insertion into protoporphyrin IX. The protein is Ferrochelatase of Coxiella burnetii (strain Dugway 5J108-111).